The following is a 667-amino-acid chain: DNA ligase (667 aa).

NAD(+) contacts are provided by residues 32 to 36, 81 to 82, and Glu-110; these read DSEYD and SL. Residue Lys-112 is the N6-AMP-lysine intermediate of the active site. The NAD(+) site is built by Arg-133, Glu-167, Lys-283, and Lys-307. The Zn(2+) site is built by Cys-401, Cys-404, Cys-419, and Cys-424. The BRCT domain maps to 586 to 667; sequence EGHPEFSGKT…FVDKQNELNS (82 aa).

The protein belongs to the NAD-dependent DNA ligase family. LigA subfamily. Mg(2+) is required as a cofactor. Requires Mn(2+) as cofactor.

The enzyme catalyses NAD(+) + (deoxyribonucleotide)n-3'-hydroxyl + 5'-phospho-(deoxyribonucleotide)m = (deoxyribonucleotide)n+m + AMP + beta-nicotinamide D-nucleotide.. Functionally, DNA ligase that catalyzes the formation of phosphodiester linkages between 5'-phosphoryl and 3'-hydroxyl groups in double-stranded DNA using NAD as a coenzyme and as the energy source for the reaction. It is essential for DNA replication and repair of damaged DNA. The chain is DNA ligase from Staphylococcus aureus (strain MRSA252).